Here is a 164-residue protein sequence, read N- to C-terminus: Lipoprotein signal peptidase (164 aa).

The next 2 helical transmembrane spans lie at 68–88 and 96–116; these read TILV…LWNA and FWGL…RAMF. Active-site residues include D121 and D139. A helical transmembrane segment spans residues 134 to 154; it reads TFNVADSAIVVGSCLLLIDLL.

It belongs to the peptidase A8 family.

Its subcellular location is the cell inner membrane. It carries out the reaction Release of signal peptides from bacterial membrane prolipoproteins. Hydrolyzes -Xaa-Yaa-Zaa-|-(S,diacylglyceryl)Cys-, in which Xaa is hydrophobic (preferably Leu), and Yaa (Ala or Ser) and Zaa (Gly or Ala) have small, neutral side chains.. It participates in protein modification; lipoprotein biosynthesis (signal peptide cleavage). Its function is as follows. This protein specifically catalyzes the removal of signal peptides from prolipoproteins. This chain is Lipoprotein signal peptidase, found in Solibacter usitatus (strain Ellin6076).